Reading from the N-terminus, the 162-residue chain is MATLQSLADLGQANKAALGTAENEAPVHVQKLDAHGRAYATGKRKDAVARVWIKPGSGVITVNDRPVETYFARPVLRMILQQPLQVANRADQYDIVVTVTGGGLSGQAGAVRHGLAKALTHYEPELRSPLKREGFLTRDPRVVERKKYGRKKARRSFQFSKR.

This sequence belongs to the universal ribosomal protein uS9 family.

The protein is Small ribosomal subunit protein uS9 of Methylobacterium sp. (strain 4-46).